We begin with the raw amino-acid sequence, 373 residues long: NADPH-dependent 3-keto-steroid reductase Hsd3b5 (373 aa).

Residues 10–15 (GAGGFL), Tyr155, and Lys159 each bind NADP(+). Lys159 serves as the catalytic Proton donor. A helical transmembrane segment spans residues 288 to 308 (LSLLYWLAFLLETVSFLLRPV). At Lys350 the chain carries N6-acetyllysine.

The protein belongs to the 3-beta-HSD family. As to expression, expressed in the male liver, starting in late puberty.

It localises to the endoplasmic reticulum membrane. It is found in the mitochondrion membrane. The enzyme catalyses a 3beta-hydroxysteroid + NADP(+) = a 3-oxosteroid + NADPH + H(+). It catalyses the reaction 5alpha-androstane-3beta,17beta-diol + NADP(+) = 17beta-hydroxy-5alpha-androstan-3-one + NADPH + H(+). The protein operates within steroid metabolism. In terms of biological role, responsible for the reduction of the oxo group on the C-3 of 5alpha-androstane steroids. Catalyzes the conversion of dihydrotestosterone to its inactive form 5alpha-androstanediol, that does not bind androgen receptor/AR. Does not function as an isomerase. In Mus musculus (Mouse), this protein is NADPH-dependent 3-keto-steroid reductase Hsd3b5.